We begin with the raw amino-acid sequence, 90 residues long: Large ribosomal subunit protein bL31 (90 aa).

The segment at 65–90 (YSKQEGSGSKSNKSKSTKSKKGKGKK) is disordered. Over residues 76-90 (NKSKSTKSKKGKGKK) the composition is skewed to basic residues.

Belongs to the bacterial ribosomal protein bL31 family. Type A subfamily. As to quaternary structure, part of the 50S ribosomal subunit.

Functionally, binds the 23S rRNA. This is Large ribosomal subunit protein bL31 from Trichodesmium erythraeum (strain IMS101).